The following is a 420-amino-acid chain: Phosphoribosylamine--glycine ligase (420 aa).

One can recognise an ATP-grasp domain in the interval 108–314 (KEIMVKYGVS…FAQNITDILD (207 aa)). Residue 134-195 (IEKHGAPIVV…EEFLEGEEFS (62 aa)) coordinates ATP. Mg(2+) contacts are provided by Glu-284 and Asn-286.

This sequence belongs to the GARS family. Mg(2+) is required as a cofactor. It depends on Mn(2+) as a cofactor.

It catalyses the reaction 5-phospho-beta-D-ribosylamine + glycine + ATP = N(1)-(5-phospho-beta-D-ribosyl)glycinamide + ADP + phosphate + H(+). The protein operates within purine metabolism; IMP biosynthesis via de novo pathway; N(1)-(5-phospho-D-ribosyl)glycinamide from 5-phospho-alpha-D-ribose 1-diphosphate: step 2/2. This is Phosphoribosylamine--glycine ligase from Streptococcus pneumoniae (strain ATCC BAA-255 / R6).